The sequence spans 1099 residues: Carbamoyl phosphate synthase large chain (1099 aa).

The interval M1–E402 is carboxyphosphate synthetic domain. ATP-binding residues include R129, R169, G175, G176, E208, I210, E215, G241, V242, H243, Q285, and E299. Residues K133–L328 enclose the ATP-grasp 1 domain. Positions 285, 299, and 301 each coordinate Mg(2+). 3 residues coordinate Mn(2+): Q285, E299, and N301. Residues Q403 to D546 form an oligomerization domain region. Positions E547 to N950 are carbamoyl phosphate synthetic domain. The ATP-grasp 2 domain occupies S677–T868. R713, R752, L754, E759, G784, I785, H786, S787, Q827, and E839 together coordinate ATP. Mg(2+) contacts are provided by Q827, E839, and N841. 3 residues coordinate Mn(2+): Q827, E839, and N841. The 149-residue stretch at N951–G1099 folds into the MGS-like domain. The interval N951–G1099 is allosteric domain.

The protein belongs to the CarB family. As to quaternary structure, composed of two chains; the small (or glutamine) chain promotes the hydrolysis of glutamine to ammonia, which is used by the large (or ammonia) chain to synthesize carbamoyl phosphate. Tetramer of heterodimers (alpha,beta)4. Mg(2+) is required as a cofactor. The cofactor is Mn(2+).

It catalyses the reaction hydrogencarbonate + L-glutamine + 2 ATP + H2O = carbamoyl phosphate + L-glutamate + 2 ADP + phosphate + 2 H(+). It carries out the reaction hydrogencarbonate + NH4(+) + 2 ATP = carbamoyl phosphate + 2 ADP + phosphate + 2 H(+). It participates in amino-acid biosynthesis; L-arginine biosynthesis; carbamoyl phosphate from bicarbonate: step 1/1. Its pathway is pyrimidine metabolism; UMP biosynthesis via de novo pathway; (S)-dihydroorotate from bicarbonate: step 1/3. In terms of biological role, large subunit of the glutamine-dependent carbamoyl phosphate synthetase (CPSase). CPSase catalyzes the formation of carbamoyl phosphate from the ammonia moiety of glutamine, carbonate, and phosphate donated by ATP, constituting the first step of 2 biosynthetic pathways, one leading to arginine and/or urea and the other to pyrimidine nucleotides. The large subunit (synthetase) binds the substrates ammonia (free or transferred from glutamine from the small subunit), hydrogencarbonate and ATP and carries out an ATP-coupled ligase reaction, activating hydrogencarbonate by forming carboxy phosphate which reacts with ammonia to form carbamoyl phosphate. This chain is Carbamoyl phosphate synthase large chain, found in Arthrobacter sp. (strain FB24).